The primary structure comprises 94 residues: Co-chaperonin GroES (94 aa).

The segment at 17-53 (DSNPNSPIQLPDSAKKKPTKGKVVSVGPGASNSDGKV) is disordered.

This sequence belongs to the GroES chaperonin family. As to quaternary structure, heptamer of 7 subunits arranged in a ring. Interacts with the chaperonin GroEL.

It is found in the cytoplasm. In terms of biological role, together with the chaperonin GroEL, plays an essential role in assisting protein folding. The GroEL-GroES system forms a nano-cage that allows encapsulation of the non-native substrate proteins and provides a physical environment optimized to promote and accelerate protein folding. GroES binds to the apical surface of the GroEL ring, thereby capping the opening of the GroEL channel. In Anaplasma phagocytophilum (strain HZ), this protein is Co-chaperonin GroES.